A 351-amino-acid polypeptide reads, in one-letter code: Probable cell division control protein 7 homolog 1 (351 aa).

The Protein kinase domain maps to 21-341; that stretch reads YTPIEKIGEG…ASDALSHPFF (321 aa). ATP-binding positions include 27–35 and Lys50; that span reads IGEGSFSVV. Asp137 functions as the Proton acceptor in the catalytic mechanism.

It belongs to the protein kinase superfamily. Ser/Thr protein kinase family. CDC7 subfamily. It depends on Mg(2+) as a cofactor.

The enzyme catalyses L-seryl-[protein] + ATP = O-phospho-L-seryl-[protein] + ADP + H(+). It carries out the reaction L-threonyl-[protein] + ATP = O-phospho-L-threonyl-[protein] + ADP + H(+). Serine/threonine-protein kinase. Needed for the initiation of DNA synthesis during mitosis as well as for synaptonemal complex formation and commitment to recombination during meiosis. The sequence is that of Probable cell division control protein 7 homolog 1 (CDC7-1) from Encephalitozoon cuniculi (strain GB-M1) (Microsporidian parasite).